The primary structure comprises 90 residues: Auxin-responsive protein SAUR19 (90 aa).

The protein belongs to the ARG7 family. As to quaternary structure, interacts with and inhibits PP2C-D subfamily of type 2C phosphatases such as PP2C67/PP2C-D1, PP2C64/PP2C-D5 and PP2C46/PP2C-D6.

The protein localises to the cell membrane. Its function is as follows. Provide a mechanistic link between auxin and plasma membrane H(+)-ATPases (PM H(+)-ATPases, e.g. AHA1 and AHA2), and triggers PM H(+)-ATPases activity by promoting phosphorylation of their C-terminal autoinhibitory domain as a result of PP2C-D subfamily of type 2C phosphatases inhibition, thus leading to the acidification of the apoplast and the facilitation of solutes and water uptake to drive cell expansion. Prevents the apical hook maintenance of etiolated seedlings. Functions as positive effectors of cell expansion through modulation of auxin transport. The polypeptide is Auxin-responsive protein SAUR19 (Arabidopsis thaliana (Mouse-ear cress)).